Consider the following 141-residue polypeptide: Putative pre-16S rRNA nuclease (141 aa).

It belongs to the YqgF nuclease family.

It is found in the cytoplasm. Its function is as follows. Could be a nuclease involved in processing of the 5'-end of pre-16S rRNA. The sequence is that of Putative pre-16S rRNA nuclease from Desulforudis audaxviator (strain MP104C).